Reading from the N-terminus, the 169-residue chain is Benzoate 1,2-dioxygenase subunit beta (169 aa).

This sequence belongs to the bacterial ring-hydroxylating dioxygenase beta subunit family. This dioxygenase system consists of three proteins: the two subunits of the hydroxylase (BenA and BenB), and an electron transfer component (BenC).

The enzyme catalyses benzoate + NADH + O2 + H(+) = (1R,6S)-1,6-dihydroxycyclohexa-2,4-diene-1-carboxylate + NAD(+). It functions in the pathway aromatic compound metabolism; benzoate degradation via hydroxylation; catechol from benzoate: step 1/2. Degradation of benzoate to 2-hydro-1,2-dihydroxybenzoate (DHB). The beta subunit may be responsible for the substrate specificity of the enzyme. The protein is Benzoate 1,2-dioxygenase subunit beta (benB) of Acinetobacter baylyi (strain ATCC 33305 / BD413 / ADP1).